The chain runs to 59 residues: Conorfamide-Ep1 (59 aa).

A signal peptide spans 1-19; sequence MSGCGFLLLALLLLVTVEA. Residues 20-25 constitute a propeptide that is removed on maturation; sequence TKMEKK. I43 carries the post-translational modification Isoleucine amide. The propeptide occupies 45 to 59; that stretch reads RRDMQSPLLSERLRF.

It belongs to the FARP (FMRFamide related peptide) family. In terms of tissue distribution, expressed by the venom duct.

The protein localises to the secreted. Neurotoxin that is active on vertebrates. When tested at high doses (10 uM), the toxin affects all zebrafish and mouse DRG neurons in culture, which could be an indication of an effect on a widely expressed receptor or ion channel found in both species. At low doses (1 uM), the effects of the toxin are confined to a specific subpopulation of zebrafish and mouse DRG neurons. In vivo, it induces long-lasting dramatic alterations in the locomotor behavior of zebrafish larvae. It rapidly induces hypoactivity and death of larvae at high doses and it causes hyperactivity at lower doses. In zebrafish adults, intramuscular injection causes the decrease of the movements and visited spaces. In mice, intracranial injection causes lethargy and prolonges sleeping phases and reduced movement. The chain is Conorfamide-Ep1 from Conus episcopatus (Bishop's cone).